We begin with the raw amino-acid sequence, 756 residues long: U3 small nucleolar RNA-associated protein 25 homolog (756 aa).

The disordered stretch occupies residues 1 to 159 (MGKRGSRSQS…SQTSPEEFTD (159 aa)). Promotes p53/TP53 degradation regions lie at residues 1–185 (MGKR…SLKA) and 573–635 (VQLP…KKEE). Ser-10 is subject to Phosphoserine. A compositionally biased stretch (basic and acidic residues) spans 25–43 (RDFGEEHPFYDRVSRKEAK). Phosphoserine occurs at positions 50, 52, 58, 60, 62, and 64. Acidic residues-rich tracts occupy residues 54-64 (DSSDSESDSES) and 84-121 (EEEE…EEMA). Residues 636–697 (LNFTHICEYT…YELPTYPHFY (62 aa)) form a represses p53/TP53 degradation region.

It belongs to the UTP25 family. Interacts with CAPN3; the interaction is required for CAPN3 translocation to the nucleolus. Phosphorylated. Phosphorylation is required to promote p53/TP53 degradation in the nucleolus which promotes cell cycle progression and liver development. As to expression, expressed in colon.

Its subcellular location is the nucleus. It is found in the nucleolus. Its function is as follows. Component of the ribosomal small subunit processome for the biogenesis of ribosomes, functions in pre-ribosomal RNA (pre-rRNA) processing. Essential for embryonic development in part through the regulation of p53 pathway. Controls the expansion growth of digestive organs and liver. Also involved in the sympathetic neuronal development. Mediates, with CAPN3, the proteasome-independent degradation of p53/TP53. The polypeptide is U3 small nucleolar RNA-associated protein 25 homolog (Homo sapiens (Human)).